The following is a 301-amino-acid chain: UDP-N-acetylenolpyruvoylglucosamine reductase 1 (301 aa).

Residues 29 to 196 (KIGGPADILI…LEAEFQLQIG (168 aa)) enclose the FAD-binding PCMH-type domain. Residue Arg174 is part of the active site. The active-site Proton donor is Ser225. Residue Glu295 is part of the active site.

It belongs to the MurB family. It depends on FAD as a cofactor.

The protein resides in the cytoplasm. The enzyme catalyses UDP-N-acetyl-alpha-D-muramate + NADP(+) = UDP-N-acetyl-3-O-(1-carboxyvinyl)-alpha-D-glucosamine + NADPH + H(+). Its pathway is cell wall biogenesis; peptidoglycan biosynthesis. Its function is as follows. Cell wall formation. The chain is UDP-N-acetylenolpyruvoylglucosamine reductase 1 from Bacillus thuringiensis subsp. konkukian (strain 97-27).